A 210-amino-acid polypeptide reads, in one-letter code: Small ribosomal subunit protein uS5 (210 aa).

The segment covering 1–23 (MARTPSSDRPERGRGGERGDRPN) has biased composition (basic and acidic residues). The interval 1–40 (MARTPSSDRPERGRGGERGDRPNRGRGGAEQTPREREESE) is disordered. One can recognise an S5 DRBM domain in the interval 41–104 (FVDKLVHINR…EQAKRNMIKI (64 aa)).

It belongs to the universal ribosomal protein uS5 family. As to quaternary structure, part of the 30S ribosomal subunit. Contacts proteins S4 and S8.

Its function is as follows. With S4 and S12 plays an important role in translational accuracy. In terms of biological role, located at the back of the 30S subunit body where it stabilizes the conformation of the head with respect to the body. This is Small ribosomal subunit protein uS5 from Paramagnetospirillum magneticum (strain ATCC 700264 / AMB-1) (Magnetospirillum magneticum).